The sequence spans 118 residues: Putative pterin-4-alpha-carbinolamine dehydratase (118 aa).

It belongs to the pterin-4-alpha-carbinolamine dehydratase family.

It catalyses the reaction (4aS,6R)-4a-hydroxy-L-erythro-5,6,7,8-tetrahydrobiopterin = (6R)-L-erythro-6,7-dihydrobiopterin + H2O. In Stutzerimonas stutzeri (strain A1501) (Pseudomonas stutzeri), this protein is Putative pterin-4-alpha-carbinolamine dehydratase.